A 199-amino-acid polypeptide reads, in one-letter code: V-type ATP synthase subunit E (199 aa).

Belongs to the V-ATPase E subunit family.

Produces ATP from ADP in the presence of a proton gradient across the membrane. The chain is V-type ATP synthase subunit E from Borrelia garinii subsp. bavariensis (strain ATCC BAA-2496 / DSM 23469 / PBi) (Borreliella bavariensis).